The following is a 128-amino-acid chain: L-ectoine synthase (128 aa).

It belongs to the ectoine synthase family.

It carries out the reaction (2S)-4-acetamido-2-aminobutanoate = L-ectoine + H2O. It participates in amine and polyamine biosynthesis; ectoine biosynthesis; L-ectoine from L-aspartate 4-semialdehyde: step 3/3. Its function is as follows. Catalyzes the circularization of gamma-N-acetyl-alpha,gamma-diaminobutyric acid (ADABA) to ectoine (1,4,5,6-tetrahydro-2-methyl-4-pyrimidine carboxylic acid), which is an excellent osmoprotectant. In Vibrio parahaemolyticus serotype O3:K6 (strain RIMD 2210633), this protein is L-ectoine synthase.